A 143-amino-acid chain; its full sequence is Large ribosomal subunit protein bL17 (143 aa).

This sequence belongs to the bacterial ribosomal protein bL17 family. Part of the 50S ribosomal subunit. Contacts protein L32.

This chain is Large ribosomal subunit protein bL17, found in Bartonella quintana (strain Toulouse) (Rochalimaea quintana).